Consider the following 959-residue polypeptide: Atromentin synthetase invA1 (959 aa).

The interval aspartate 59 to valine 466 is adenylation (A) domain. The Carrier domain maps to threonine 598–lysine 676. The interval threonine 603–valine 673 is thiolation and peptide carrier (T) domain. Position 635 is an O-(pantetheine 4'-phosphoryl)serine (serine 635). The segment at proline 699–phenylalanine 946 is thioesterase (TE) domain.

It belongs to the ATP-dependent AMP-binding enzyme family.

The protein operates within secondary metabolite biosynthesis. Its function is as follows. An L-tyrosine:2-oxoglutarate aminotransferase (probably invD) and atromentin synthetase invA1 catalyze consecutive steps to turn over L-tyrosine into atromentin, which represents the generic precursor molecule for the entire terphenylquinone and pulvinic acid family of pigments, which are widely distributed secondary metabolites in homobasidiomycetes. The first step catalyzed by the aminotransferase converts L-tyrosine in to 4-hydroxyphenylpyruvate (4-HPP). Adenylation of two 4-HPP monomers by the invA1 adenylation (A) domain, covalent tethering of the monomers as a thioester and oxoester onto the invA1 thiolation (T) and thioesterase (TE) domains, respectively, and symmetric C-C-bond formation between two monomers catalyzed by the invA1 TE domain leads to atromentin. The protein is Atromentin synthetase invA1 (invA1) of Paxillus involutus (Naked brimcap).